Reading from the N-terminus, the 470-residue chain is Histidine--tRNA ligase (470 aa).

Positions 69 to 99 (GIDPILPPNRQAEKDKSGETGKDKSGETGSE) are disordered. The segment covering 79–94 (QAEKDKSGETGKDKSG) has biased composition (basic and acidic residues).

This sequence belongs to the class-II aminoacyl-tRNA synthetase family. Homodimer.

It localises to the cytoplasm. It carries out the reaction tRNA(His) + L-histidine + ATP = L-histidyl-tRNA(His) + AMP + diphosphate + H(+). The chain is Histidine--tRNA ligase from Nostoc punctiforme (strain ATCC 29133 / PCC 73102).